The chain runs to 290 residues: Pyridoxal 5'-phosphate synthase subunit PdxS (290 aa).

D-ribose 5-phosphate is bound at residue aspartate 22. The active-site Schiff-base intermediate with D-ribose 5-phosphate is lysine 79. Residue glycine 151 participates in D-ribose 5-phosphate binding. Residue arginine 163 coordinates D-glyceraldehyde 3-phosphate. D-ribose 5-phosphate is bound by residues glycine 212 and 233 to 234 (GS).

Belongs to the PdxS/SNZ family. In terms of assembly, in the presence of PdxT, forms a dodecamer of heterodimers.

The enzyme catalyses aldehydo-D-ribose 5-phosphate + D-glyceraldehyde 3-phosphate + L-glutamine = pyridoxal 5'-phosphate + L-glutamate + phosphate + 3 H2O + H(+). It participates in cofactor biosynthesis; pyridoxal 5'-phosphate biosynthesis. Catalyzes the formation of pyridoxal 5'-phosphate from ribose 5-phosphate (RBP), glyceraldehyde 3-phosphate (G3P) and ammonia. The ammonia is provided by the PdxT subunit. Can also use ribulose 5-phosphate and dihydroxyacetone phosphate as substrates, resulting from enzyme-catalyzed isomerization of RBP and G3P, respectively. The sequence is that of Pyridoxal 5'-phosphate synthase subunit PdxS from Clostridium botulinum (strain Loch Maree / Type A3).